The chain runs to 425 residues: Sensor histidine kinase NarS (425 aa).

A run of 6 helical transmembrane segments spans residues 42–62, 71–91, 107–127, 130–150, 155–175, and 181–201; these read IASV…VVGT, IVLI…AYSA, LEPF…QLLS, GIYP…DVST, VVLA…PVML, and PETI…LMVV. The Histidine kinase domain maps to 224 to 425; the sequence is QTMTASEVLQ…HVCVELPLKR (202 aa). Phosphohistidine; by autocatalysis is present on His241.

In terms of processing, autophosphorylated on His-241.

The protein resides in the cell membrane. The enzyme catalyses ATP + protein L-histidine = ADP + protein N-phospho-L-histidine.. Member of the two-component regulatory system NarS/NarL involved in gene expression during aerobic nitrate metabolism. Plays therefore a crucial role in anaerobic survival of mycobacteria in host. Functions as a sensor protein kinase which is autophosphorylated at a histidine residue and transfers its phosphate group to the conserved aspartic acid residue in the regulatory domain of NarL. In turn, NarL binds to the upstream promoter regions of target genes to regulate their expression during aerobic nitrate metabolism. The protein is Sensor histidine kinase NarS of Mycobacterium tuberculosis (strain ATCC 25618 / H37Rv).